A 107-amino-acid chain; its full sequence is UPF0060 membrane protein Atu1058 (107 aa).

A run of 4 helical transmembrane segments spans residues 5-25 (LIYV…WAWL), 32-52 (WILL…TLVA), 59-79 (AYAA…WGVE), and 85-105 (RWDI…LFGP).

This sequence belongs to the UPF0060 family.

Its subcellular location is the cell inner membrane. In Agrobacterium fabrum (strain C58 / ATCC 33970) (Agrobacterium tumefaciens (strain C58)), this protein is UPF0060 membrane protein Atu1058.